Here is a 335-residue protein sequence, read N- to C-terminus: Transcriptional adapter 1 (335 aa).

The disordered stretch occupies residues 83-103; that stretch reads LPWPGGSAAKPGKPKGKKKLS. Residues 84–93 show a composition bias toward low complexity; sequence PWPGGSAAKP. Over residues 94–103 the composition is skewed to basic residues; that stretch reads GKPKGKKKLS.

The protein belongs to the TADA1 family. As to quaternary structure, component of the STAGA transcription coactivator-HAT complex, at least composed of SUPT3H, GCN5L2, TAF5L, TAF6L, SUPT7L, TADA3L, TAD1L, TAF10, TAF12, TRRAP and TAF9.

The protein resides in the nucleus. Probably involved in transcriptional regulation. This chain is Transcriptional adapter 1 (TADA1), found in Homo sapiens (Human).